Reading from the N-terminus, the 283-residue chain is Thymidylate synthase (283 aa).

Arginine 22 lines the dUMP pocket. Cysteine 160 functions as the Nucleophile in the catalytic mechanism. DUMP is bound by residues 180–183, asparagine 191, and 221–223; these read RSCD and HIY. Aspartate 183 is a (6R)-5,10-methylene-5,6,7,8-tetrahydrofolate binding site. Serine 282 lines the (6R)-5,10-methylene-5,6,7,8-tetrahydrofolate pocket.

Belongs to the thymidylate synthase family. Bacterial-type ThyA subfamily. As to quaternary structure, homodimer.

The protein localises to the cytoplasm. It carries out the reaction dUMP + (6R)-5,10-methylene-5,6,7,8-tetrahydrofolate = 7,8-dihydrofolate + dTMP. It functions in the pathway pyrimidine metabolism; dTTP biosynthesis. Functionally, catalyzes the reductive methylation of 2'-deoxyuridine-5'-monophosphate (dUMP) to 2'-deoxythymidine-5'-monophosphate (dTMP) while utilizing 5,10-methylenetetrahydrofolate (mTHF) as the methyl donor and reductant in the reaction, yielding dihydrofolate (DHF) as a by-product. This enzymatic reaction provides an intracellular de novo source of dTMP, an essential precursor for DNA biosynthesis. This is Thymidylate synthase from Tolumonas auensis (strain DSM 9187 / NBRC 110442 / TA 4).